The chain runs to 280 residues: Bis(5'-nucleosyl)-tetraphosphatase, symmetrical (280 aa).

Belongs to the Ap4A hydrolase family.

It catalyses the reaction P(1),P(4)-bis(5'-adenosyl) tetraphosphate + H2O = 2 ADP + 2 H(+). Hydrolyzes diadenosine 5',5'''-P1,P4-tetraphosphate to yield ADP. The sequence is that of Bis(5'-nucleosyl)-tetraphosphatase, symmetrical from Shigella flexneri serotype 5b (strain 8401).